The primary structure comprises 475 residues: Peripherin (475 aa).

The disordered stretch occupies residues 1–42 (MPSSASMSHHHSSGLRSSISSTSYRRTFGPPPSLSPGAFSYS). The interval 1–103 (MPSSASMSHH…FLATRSNEKQ (103 aa)) is head. A compositionally biased stretch (low complexity) spans 14 to 26 (GLRSSISSTSYRR). At Tyr-24 the chain carries 3'-nitrotyrosine. Phosphoserine occurs at positions 35 and 57. Residue Ser-66 is modified to Phosphoserine; by PKB/AKT1. The IF rod domain maps to 101-411 (EKQELQELND…KLLEGEESRI (311 aa)). The interval 104–136 (ELQELNDRFANFIEKVRFLEQQNAALRGELSQA) is coil 1A. The tract at residues 137–147 (RGQEPARADQL) is linker 1. The interval 148 to 243 (CQQELRELRR…KLHEEELRDL (96 aa)) is coil 1B. The linker 2 stretch occupies residues 244–266 (QVSVESQQVQQVEVEATVKPELT). The interval 267-409 (AALRDIRAQY…YRKLLEGEES (143 aa)) is coil 2. At Tyr-383 the chain carries 3'-nitrotyrosine. The tail stretch occupies residues 410–475 (RISVPVHSFA…DLDKSSIHSY (66 aa)). The interval 453–475 (EKVVTESQKEQHSDLDKSSIHSY) is disordered. Phosphotyrosine is present on Tyr-475.

It belongs to the intermediate filament family. Forms homodimers (in vitro). Homopolymerizes into a filamentous network (in vitro). Forms heterodimers with NEFL, NEFM or NEFH (in vitro). Interacts with DST (via C-terminus). Interacts with RAB7A; the interaction is direct. Interacts with PRKCE (via phorbol-ester/DAG-type 2 domain). In terms of processing, phosphorylated; phosphorylation increases after nerve injury in regenerating neurons. In terms of tissue distribution, expressed in the sciatic nerve and at very low levels in the central nervous system (at protein level). Expressed in the spinal cord, in the sciatic nerve at the level of the dorsal root ganglion and in trigeminal nerves (at protein level). Expressed in the cranial nerves in the hindbrain, including the sensory and motor trigeminal neurons, the mesencephalic trigeminal neurons, the spinal trigeminal neurons, and in the facial nerve (at protein level). Expressed in the cerebellum, with expression in the inferior cerebellar peduncle and the lateral deep cerebellar nucleus (at protein level). Expressed in vestibulocochlear neurons, such as the anteroventral cochlear nucleus, the dorsal cochlear nucleus, the superficial granule cell layer and the granule cell lamina (at protein level). Expressed in glossopharyngeal, vagal and hypoglossal neurons (at protein level). Expressed in peripheral sensory neurons, in the dorsal root ganglia and the spinal cord, and to a lower extent in motor neurons. Expressed in the optic tract of the central nervous system, especially in the lateral geniculate nucleus and the superior colliculus. Expressed in neurons of the pineal stalk in the cortex. Expressed in the spinal trigeminal tract of the midbrain, in the medulla and in the medial cerebellar peduncle.

It localises to the cytoplasm. The protein resides in the cytoskeleton. Its subcellular location is the cell projection. It is found in the axon. The protein localises to the perikaryon. In terms of biological role, class-III neuronal intermediate filament protein. May form an independent structural network without the involvement of other neurofilaments or may cooperate with the neuronal intermediate filament proteins NEFL, NEFH, NEFM and INA to form filamentous networks. Assembly of the neuronal intermediate filaments may be regulated by RAB7A. Plays a role in the development of unmyelinated sensory neurons. May be involved in axon elongation and axon regeneration after injury. Inhibits neurite extension in type II spiral ganglion neurons in the cochlea. This chain is Peripherin (Prph), found in Mus musculus (Mouse).